We begin with the raw amino-acid sequence, 319 residues long: Transaldolase (319 aa).

The Schiff-base intermediate with substrate role is filled by Lys132.

The protein belongs to the transaldolase family. Type 1 subfamily. In terms of assembly, homodimer.

The protein resides in the cytoplasm. It carries out the reaction D-sedoheptulose 7-phosphate + D-glyceraldehyde 3-phosphate = D-erythrose 4-phosphate + beta-D-fructose 6-phosphate. It functions in the pathway carbohydrate degradation; pentose phosphate pathway; D-glyceraldehyde 3-phosphate and beta-D-fructose 6-phosphate from D-ribose 5-phosphate and D-xylulose 5-phosphate (non-oxidative stage): step 2/3. In terms of biological role, transaldolase is important for the balance of metabolites in the pentose-phosphate pathway. In Alteromonas mediterranea (strain DSM 17117 / CIP 110805 / LMG 28347 / Deep ecotype), this protein is Transaldolase.